Consider the following 384-residue polypeptide: Urotensin-2 receptor (384 aa).

Residues 1-54 (MALSPEPSSRFLVPATMGSAMPELPGAPNASLNSSLASPTEPNSLEDLVATGTI) lie on the Extracellular side of the membrane. Residues Asn29 and Asn33 are each glycosylated (N-linked (GlcNAc...) asparagine). A helical membrane pass occupies residues 55-77 (GVVLSAMGVVGMAGNVYTLTVMC). Residues 78–87 (RFLHTSASMY) are Cytoplasmic-facing. A helical membrane pass occupies residues 88-113 (VYVINLALADLLYLLSIPFIVATYVT). Residues 114-124 (KRWHFGDVGCR) are Extracellular-facing. A disulfide bridge links Cys123 with Cys199. A helical transmembrane segment spans residues 125–146 (VLFSLDFLTMHASIFTLTLMSR). Topologically, residues 147–167 (ERYAAVVRPLDTVQRSKGYRK) are cytoplasmic. The chain crosses the membrane as a helical span at residues 168-186 (VLALGTWLLALLLALPMML). Over 187 to 209 (AIRLVRRGHKSLCLPAWGQRTHR) the chain is Extracellular. Residues 210–232 (AYLTLLFGTSIVGPGVVIGLLYV) traverse the membrane as a helical segment. The Cytoplasmic portion of the chain corresponds to 233-259 (RLARAYWLSQRSSFTQTRRLPNPRVLY). Residues 260–285 (LILGIVLLFWACFLPFWLWQLLAQYR) form a helical membrane-spanning segment. The Extracellular portion of the chain corresponds to 286-299 (GAPPLAPRSARIVN). Residues 300–320 (YLTTCLTYGNSCVNPFLYTLL) traverse the membrane as a helical segment. Residues 321 to 384 (TKNYRDYRQR…SQAVPGSLCV (64 aa)) are Cytoplasmic-facing.

Belongs to the G-protein coupled receptor 1 family. Expressed in neural tissue, including sensory epithelia.

Its subcellular location is the cell membrane. Its function is as follows. High affinity receptor for urotensin-2 and urotensin-2B. The activity of this receptor is mediated by a G-protein that activate a phosphatidylinositol-calcium second messenger system. The chain is Urotensin-2 receptor (UTS2R) from Bos taurus (Bovine).